The sequence spans 356 residues: Tyrosine recombinase XerS (356 aa).

The region spanning 16–121 (IMPWYVLEYY…ALSSLFKYLT (106 aa)) is the Core-binding (CB) domain. One can recognise a Tyr recombinase domain in the interval 169 to 354 (EFLEYIDCEY…VNDEQKNALD (186 aa)). Active-site residues include arginine 210, lysine 234, histidine 306, arginine 309, and histidine 332. Tyrosine 341 (O-(3'-phospho-DNA)-tyrosine intermediate) is an active-site residue.

This sequence belongs to the 'phage' integrase family. XerS subfamily.

It localises to the cytoplasm. With respect to regulation, ftsK is required for recombination. Site-specific tyrosine recombinase, which acts by catalyzing the cutting and rejoining of the recombining DNA molecules. Essential to convert dimers of the bacterial chromosome into monomers to permit their segregation at cell division. The protein is Tyrosine recombinase XerS of Streptococcus agalactiae serotype Ia (strain ATCC 27591 / A909 / CDC SS700).